Consider the following 476-residue polypeptide: MAKEQVQAITKMEEDFAQWYTDIVKKAELVDYSSVKGCMILRPYGYALWENMQKVMDEKLKATGHENVYMPMFIPESLLQKEKDHVEGFAPEVAWVTHGGDEKLAERLCIRPTSETLFCEHFSKIVQSYNDLPKLYNQWCSVVRWEKTTRPFLRTTEFLWQEGHTIHETAEESQAETLNILNLYASFCEDYLAIPVIKGQKTEKEKFAGAKATYTIESLMHDGKALQTGTSHNFGTNFSEAFDIKFLDRTGKWQYVHQTSWGVSTRMIGGLIMVHGDNNGLVMPPKVAPVQVVIVPIAQHKEGVLAKAIELQGHIQKVARVKIDASNKTPGWKFNEYEMKGIPIRLEVGPKDIEKNQVVLVRRDTKEKEFISMDQLEERIPALLEEIHNSLFNKAKVFRDENTYSVTNFEEMKKIADEKQGFIKAMWCGELACEEKLKEEVGVSSRCMPFEQEHLADECVCCGKEAKQMVYWGKAY.

Belongs to the class-II aminoacyl-tRNA synthetase family. ProS type 3 subfamily. Homodimer.

The protein resides in the cytoplasm. The catalysed reaction is tRNA(Pro) + L-proline + ATP = L-prolyl-tRNA(Pro) + AMP + diphosphate. In terms of biological role, catalyzes the attachment of proline to tRNA(Pro) in a two-step reaction: proline is first activated by ATP to form Pro-AMP and then transferred to the acceptor end of tRNA(Pro). The chain is Proline--tRNA ligase 2 from Bacillus cereus (strain ZK / E33L).